Consider the following 585-residue polypeptide: Arginine--tRNA ligase (585 aa).

The 'HIGH' region signature appears at 127–137 (PNTNKPLHVGH).

This sequence belongs to the class-I aminoacyl-tRNA synthetase family. As to quaternary structure, monomer.

Its subcellular location is the cytoplasm. The catalysed reaction is tRNA(Arg) + L-arginine + ATP = L-arginyl-tRNA(Arg) + AMP + diphosphate. This is Arginine--tRNA ligase from Borrelia garinii subsp. bavariensis (strain ATCC BAA-2496 / DSM 23469 / PBi) (Borreliella bavariensis).